We begin with the raw amino-acid sequence, 369 residues long: Geranylgeranyl pyrophosphate synthase, chloroplastic (369 aa).

Isopentenyl diphosphate contacts are provided by K118, R121, and H150. Positions 157 and 163 each coordinate Mg(2+). R168 is a dimethylallyl diphosphate binding site. R169 contributes to the isopentenyl diphosphate binding site. Residues K254, T255, Q292, K309, and K319 each coordinate dimethylallyl diphosphate.

Belongs to the FPP/GGPP synthase family. Monomer. Requires Mg(2+) as cofactor.

It is found in the plastid. The protein localises to the chloroplast. The catalysed reaction is isopentenyl diphosphate + dimethylallyl diphosphate = (2E)-geranyl diphosphate + diphosphate. It carries out the reaction isopentenyl diphosphate + (2E)-geranyl diphosphate = (2E,6E)-farnesyl diphosphate + diphosphate. The enzyme catalyses isopentenyl diphosphate + (2E,6E)-farnesyl diphosphate = (2E,6E,10E)-geranylgeranyl diphosphate + diphosphate. It functions in the pathway isoprenoid biosynthesis; farnesyl diphosphate biosynthesis; farnesyl diphosphate from geranyl diphosphate and isopentenyl diphosphate: step 1/1. The protein operates within isoprenoid biosynthesis; geranyl diphosphate biosynthesis; geranyl diphosphate from dimethylallyl diphosphate and isopentenyl diphosphate: step 1/1. Its pathway is isoprenoid biosynthesis; geranylgeranyl diphosphate biosynthesis; geranylgeranyl diphosphate from farnesyl diphosphate and isopentenyl diphosphate: step 1/1. Its function is as follows. Catalyzes the trans-addition of the three molecules of IPP onto DMAPP to form geranylgeranyl pyrophosphate. This Capsicum annuum (Capsicum pepper) protein is Geranylgeranyl pyrophosphate synthase, chloroplastic.